Reading from the N-terminus, the 1311-residue chain is Protein PARALOG OF AIPP2 (1311 aa).

Disordered regions lie at residues 1–21 (MADRRVGKRQMGQRGFSKVES), 114–141 (ISDDSGAAAMTSKPSLSGSRMKHKVSAS), and 178–280 (GNKD…EMVE). Residues 213-240 (NHDDRVSSEKGNFKEKSRPGGNKERQEP) show a composition bias toward basic and acidic residues. The span at 258–270 (SKSSSSNSSAVSE) shows a compositional bias: low complexity. Residues 283–334 (VKVCDICGDAGREDLLAICSGCSDGAEHTYCMREMLDEVPEGDWLCEECAEE) form a PHD-type zinc finger. Cys286, Cys289, Cys301, Cys304, His310, Cys313, Cys328, and Cys331 together coordinate Zn(2+). Residues 328-348 (CEECAEEAEKQKQEAKRKRET) are a coiled coil. Disordered regions lie at residues 369–390 (PDAKRQVVEASTGSPKKSILPR), 411–440 (NHQTSFSDDTESARSAGSQLQPPKGAFLKS), 460–701 (HPRQ…EDLN), 975–1050 (TNPQ…PSKK), 1059–1078 (EAGVNHIPPQVTGSNSGDSL), 1087–1138 (EQEL…NPAN), 1152–1186 (NDGLCEGSPNKKLKTENGSSSLCRDTSGHDSGIMK), and 1249–1311 (LSRS…DLPR). The span at 411–431 (NHQTSFSDDTESARSAGSQLQ) shows a compositional bias: polar residues. The segment covering 460-472 (HPRQKTGKEDTAL) has biased composition (basic and acidic residues). Residues 487–502 (PSRTTDAGNSGGSDSQ) are compositionally biased toward polar residues. Over residues 512–528 (HSQEGKSLKQVKDRNRE) the composition is skewed to basic and acidic residues. Over residues 529-552 (ANASASSIDQKLKSRGNSSVSHAN) the composition is skewed to polar residues. Over residues 553–566 (NNRDLKGLQSDGKR) the composition is skewed to basic and acidic residues. Over residues 569 to 607 (LTKQVSNLSRNRLENSVVSGGDISTNEKCSASEQSSSQA) the composition is skewed to polar residues. The segment covering 640 to 653 (VPREVGKKSKEAFS) has biased composition (basic and acidic residues). Composition is skewed to polar residues over residues 668-694 (PSSQKGGQTAESSDTSGVSDSDLSTTK), 977-988 (PQKNTSLPTSNV), and 1014-1025 (LRESSSNGIETR). Positions 1026-1050 (NGTDARSHENPNNRESSIERSPSKK) are enriched in basic and acidic residues. Residues 1087–1096 (EQELGGRKDL) are compositionally biased toward basic and acidic residues. Residues 1250 to 1263 (SRSSNSGEQSNNSM) show a composition bias toward polar residues. The stretch at 1256–1276 (GEQSNNSMNKEKQKADEEEED) forms a coiled coil. The span at 1280–1289 (VAASLSLSLS) shows a compositional bias: low complexity.

Part of the BAH-PHD bivalent histone reader complex that contains AIPP2, PAIPP2 and AIPP3/BDT1; the BAH-PHD module associates with CPL2 to form the BAH-PHD-CPL2 complex (BPC) for transcriptional repression. Binds directly to AIPP3/BDT1 and CPL2, but not to AIPP2. As to expression, expressed ubiquitously.

Together with AIPP2 and AIPP3/BDT1, cooperates to form a BAH-PHD bivalent histone reader complex able to read histone H3 lysine 27 trimethylation (H3K27me3) and low-methylated H3K4 histone marks in order to regulate transcription, especially to prevent early flowering; promotes AIPP3/BDT1 binding to H3K27me3. CPL2 is subsequently recruited to form a BAH-PHD-CPL2 complex (BPC) in order to silence several H3K27me3 and low-methylated H3K4 enriched loci, including AGO5, via the phosphorylation state-dependent inhibition of Pol II release from the transcriptional start site (e.g. Ser5P-Pol II dephosphorylation). The BPC complex represses flowering by inhibiting the expression of several genes, including AGL6, FT, FUL and SOC1. This chain is Protein PARALOG OF AIPP2, found in Arabidopsis thaliana (Mouse-ear cress).